Here is a 198-residue protein sequence, read N- to C-terminus: Transcription factor LBX2 (198 aa).

Disordered regions lie at residues 24–46 (MVPR…SPLC), 63–89 (ALQP…RKSR), and 173–198 (DPGL…QVDD). Positions 85 to 144 (RRKSRTAFTAQQVLELERRFVFQKYLAPSERDGLATRLGLANAQVVTWFQNRRAKLKRDV) form a DNA-binding region, homeobox.

Its subcellular location is the nucleus. Its function is as follows. Transcription factor. The sequence is that of Transcription factor LBX2 (LBX2) from Homo sapiens (Human).